A 230-amino-acid polypeptide reads, in one-letter code: Type 4 apparatus protein DotY (230 aa).

The interval 202–230 is disordered; it reads EPKALETKREEIRQEIESGAEAPTTQSIR. Positions 204–217 are enriched in basic and acidic residues; it reads KALETKREEIRQEI.

As to quaternary structure, the T4BSS is a complex nanomachine composed of several subcomplexes. This subunit is part of the Type IV Coupling Complex (T4CC), a subcomplex composed of the DotLMNYZ core and the IcmSW-LvgA adapter subunits, linked by the C-terminal tail of DotL. Six DotLMNYZ hetero-pentameric units may assemble into a hexameric nanomachine, forming an inner membrane channel for effectors to pass through. Interacts exclusively with DotZ. DotY and DotZ are co-dependent for the assembly into the T4CC.

Its subcellular location is the cytoplasm. Component of the Dot/Icm type IVB secretion system (T4BSS), which is used to inject bacterial effector proteins into eukaryotic host cells. Part of a subcomplex which recruits effector proteins and delivers them to the core transmembrane subcomplex. DotY and DotZ play a role in effector translocation, but are not essential and do not influence the stability of the subcomplex main components. The DotY/DotZ main function is to optimize secretion by modulating the delivery trajectory of the IcmSW module and the localization of the machinery to the poles. The polypeptide is Type 4 apparatus protein DotY (Legionella pneumophila subsp. pneumophila (strain Philadelphia 1 / ATCC 33152 / DSM 7513)).